The sequence spans 202 residues: Inosine triphosphate pyrophosphatase (202 aa).

Residue 8–13 (TGNANK) participates in ITP binding. Glu-55 contributes to the Mg(2+) binding site. ITP contacts are provided by residues Lys-67, 83–84 (DT), Lys-100, 159–162 (FGWD), Lys-182, and 187–188 (HR).

The protein belongs to the HAM1 NTPase family. As to quaternary structure, homodimer. Mg(2+) is required as a cofactor. Requires Mn(2+) as cofactor.

Its subcellular location is the cytoplasm. It is found in the nucleus. It catalyses the reaction ITP + H2O = IMP + diphosphate + H(+). The catalysed reaction is dITP + H2O = dIMP + diphosphate + H(+). It carries out the reaction XTP + H2O = XMP + diphosphate + H(+). In terms of biological role, pyrophosphatase that hydrolyzes non-canonical purine nucleotides such as inosine triphosphate (ITP), deoxyinosine triphosphate (dITP) or xanthosine 5'-triphosphate (XTP) to their respective monophosphate derivatives. The enzyme does not distinguish between the deoxy- and ribose forms. Probably excludes non-canonical purines from RNA and DNA precursor pools, thus preventing their incorporation into RNA and DNA and avoiding chromosomal lesions. The polypeptide is Inosine triphosphate pyrophosphatase (Candida albicans (strain SC5314 / ATCC MYA-2876) (Yeast)).